A 157-amino-acid chain; its full sequence is 6,7-dimethyl-8-ribityllumazine synthase 1 (157 aa).

Residues F22, 53 to 55, and 82 to 84 each bind 5-amino-6-(D-ribitylamino)uracil; these read ALE and TVI. Residue 87 to 88 participates in (2S)-2-hydroxy-3-oxobutyl phosphate binding; that stretch reads ET. H90 functions as the Proton donor in the catalytic mechanism. N115 contributes to the 5-amino-6-(D-ribitylamino)uracil binding site. (2S)-2-hydroxy-3-oxobutyl phosphate is bound at residue R129.

It belongs to the DMRL synthase family.

The enzyme catalyses (2S)-2-hydroxy-3-oxobutyl phosphate + 5-amino-6-(D-ribitylamino)uracil = 6,7-dimethyl-8-(1-D-ribityl)lumazine + phosphate + 2 H2O + H(+). It functions in the pathway cofactor biosynthesis; riboflavin biosynthesis; riboflavin from 2-hydroxy-3-oxobutyl phosphate and 5-amino-6-(D-ribitylamino)uracil: step 1/2. In terms of biological role, catalyzes the formation of 6,7-dimethyl-8-ribityllumazine by condensation of 5-amino-6-(D-ribitylamino)uracil with 3,4-dihydroxy-2-butanone 4-phosphate. This is the penultimate step in the biosynthesis of riboflavin. The polypeptide is 6,7-dimethyl-8-ribityllumazine synthase 1 (Brucella suis biovar 1 (strain 1330)).